Here is a 291-residue protein sequence, read N- to C-terminus: 33 kDa chaperonin (291 aa).

Intrachain disulfides connect C229/C231 and C262/C265.

This sequence belongs to the HSP33 family. Under oxidizing conditions two disulfide bonds are formed involving the reactive cysteines. Under reducing conditions zinc is bound to the reactive cysteines and the protein is inactive.

It localises to the cytoplasm. Functionally, redox regulated molecular chaperone. Protects both thermally unfolding and oxidatively damaged proteins from irreversible aggregation. Plays an important role in the bacterial defense system toward oxidative stress. This is 33 kDa chaperonin from Aliivibrio fischeri (strain ATCC 700601 / ES114) (Vibrio fischeri).